We begin with the raw amino-acid sequence, 151 residues long: Small ribosomal subunit protein uS15 (151 aa).

Belongs to the universal ribosomal protein uS15 family. Component of the small ribosomal subunit. Part of the small subunit (SSU) processome, composed of more than 70 proteins and the RNA chaperone small nucleolar RNA (snoRNA) U3.

It localises to the cytoplasm. It is found in the nucleus. Its subcellular location is the nucleolus. Component of the small ribosomal subunit. The ribosome is a large ribonucleoprotein complex responsible for the synthesis of proteins in the cell. Part of the small subunit (SSU) processome, first precursor of the small eukaryotic ribosomal subunit. During the assembly of the SSU processome in the nucleolus, many ribosome biogenesis factors, an RNA chaperone and ribosomal proteins associate with the nascent pre-rRNA and work in concert to generate RNA folding, modifications, rearrangements and cleavage as well as targeted degradation of pre-ribosomal RNA by the RNA exosome. The chain is Small ribosomal subunit protein uS15 (rps-13) from Caenorhabditis elegans.